The primary structure comprises 418 residues: Dual-specificity RNA methyltransferase RlmN (418 aa).

Residues 1–21 (MADTSLMPIPGQVDPVPAPRD) are disordered. Catalysis depends on E122, which acts as the Proton acceptor. Residues 128–383 (DADRGTLCVS…APVRTPRGRD (256 aa)) enclose the Radical SAM core domain. An intrachain disulfide couples C135 to C388. [4Fe-4S] cluster contacts are provided by C142, C146, and C149. S-adenosyl-L-methionine-binding positions include 212 to 213 (GE), S244, 266 to 268 (SLH), and N345. The active-site S-methylcysteine intermediate is the C388. Residues 393 to 418 (TAAQKKSRAERDREAAAEAEAAASQA) form a disordered region. A compositionally biased stretch (basic and acidic residues) spans 399-408 (SRAERDREAA).

This sequence belongs to the radical SAM superfamily. RlmN family. Requires [4Fe-4S] cluster as cofactor.

It localises to the cytoplasm. The enzyme catalyses adenosine(2503) in 23S rRNA + 2 reduced [2Fe-2S]-[ferredoxin] + 2 S-adenosyl-L-methionine = 2-methyladenosine(2503) in 23S rRNA + 5'-deoxyadenosine + L-methionine + 2 oxidized [2Fe-2S]-[ferredoxin] + S-adenosyl-L-homocysteine. It catalyses the reaction adenosine(37) in tRNA + 2 reduced [2Fe-2S]-[ferredoxin] + 2 S-adenosyl-L-methionine = 2-methyladenosine(37) in tRNA + 5'-deoxyadenosine + L-methionine + 2 oxidized [2Fe-2S]-[ferredoxin] + S-adenosyl-L-homocysteine. Functionally, specifically methylates position 2 of adenine 2503 in 23S rRNA and position 2 of adenine 37 in tRNAs. m2A2503 modification seems to play a crucial role in the proofreading step occurring at the peptidyl transferase center and thus would serve to optimize ribosomal fidelity. The polypeptide is Dual-specificity RNA methyltransferase RlmN (Erythrobacter litoralis (strain HTCC2594)).